Consider the following 190-residue polypeptide: Elongation factor P 2 (190 aa).

The protein belongs to the elongation factor P family.

It localises to the cytoplasm. Its pathway is protein biosynthesis; polypeptide chain elongation. Involved in peptide bond synthesis. Stimulates efficient translation and peptide-bond synthesis on native or reconstituted 70S ribosomes in vitro. Probably functions indirectly by altering the affinity of the ribosome for aminoacyl-tRNA, thus increasing their reactivity as acceptors for peptidyl transferase. The chain is Elongation factor P 2 (efp2) from Chlamydia pneumoniae (Chlamydophila pneumoniae).